An 81-amino-acid polypeptide reads, in one-letter code: MSKKIGIEQSLSDVEAALKEKGYEVVTMKTEDDAKGCDCCVVTGLDTDMLGISDTMTGASVIQATGLTADEICQQVEQKLQ.

It belongs to the UPF0180 family.

This chain is UPF0180 protein BLi01634/BL05144, found in Bacillus licheniformis (strain ATCC 14580 / DSM 13 / JCM 2505 / CCUG 7422 / NBRC 12200 / NCIMB 9375 / NCTC 10341 / NRRL NRS-1264 / Gibson 46).